Here is a 170-residue protein sequence, read N- to C-terminus: Ureidoglycolate lyase (170 aa).

Belongs to the ureidoglycolate lyase family. Homodimer. Requires Ni(2+) as cofactor.

The enzyme catalyses (S)-ureidoglycolate = urea + glyoxylate. It functions in the pathway nitrogen metabolism; (S)-allantoin degradation. In terms of biological role, catalyzes the catabolism of the allantoin degradation intermediate (S)-ureidoglycolate, generating urea and glyoxylate. Involved in the utilization of allantoin as nitrogen source. This Burkholderia mallei (strain NCTC 10247) protein is Ureidoglycolate lyase.